The primary structure comprises 362 residues: Methionine import ATP-binding protein MetN (362 aa).

In terms of domain architecture, ABC transporter spans 2 to 241 (IHIENLSKTY…PRHEVTRAMV (240 aa)). Residue 38 to 45 (GPSGAGKS) participates in ATP binding.

This sequence belongs to the ABC transporter superfamily. Methionine importer (TC 3.A.1.24) family. The complex is composed of two ATP-binding proteins (MetN), two transmembrane proteins (MetI) and a solute-binding protein (MetQ).

It is found in the cell inner membrane. The catalysed reaction is L-methionine(out) + ATP + H2O = L-methionine(in) + ADP + phosphate + H(+). It carries out the reaction D-methionine(out) + ATP + H2O = D-methionine(in) + ADP + phosphate + H(+). In terms of biological role, part of the ABC transporter complex MetNIQ involved in methionine import. Responsible for energy coupling to the transport system. This chain is Methionine import ATP-binding protein MetN, found in Bordetella bronchiseptica (strain ATCC BAA-588 / NCTC 13252 / RB50) (Alcaligenes bronchisepticus).